A 479-amino-acid polypeptide reads, in one-letter code: Variant surface glycoprotein ILTAT 1.22 (479 aa).

Positions 1–12 (MDTAQVFALFYM) are cleaved as a signal peptide. 2 N-linked (GlcNAc...) asparagine glycosylation sites follow: Asn120 and Asn458. Asn462 carries the GPI-anchor amidated asparagine lipid modification. Positions 463–479 (NSFAIKTSTLLLAVLLF) are cleaved as a propeptide — removed in mature form.

The protein resides in the cell membrane. VSG forms a coat on the surface of the parasite. The trypanosome evades the immune response of the host by expressing a series of antigenically distinct VSGs from an estimated 1000 VSG genes. This is Variant surface glycoprotein ILTAT 1.22 from Trypanosoma brucei brucei.